Here is a 187-residue protein sequence, read N- to C-terminus: Calcium and integrin-binding family member 3 (187 aa).

EF-hand domains follow at residues 66–101 (KDNP…MSEM), 103–138 (PRDL…LTRG), and 144–179 (EVSL…APDF). The Ca(2+) site is built by Asp116, Asn118, Asp120, Tyr122, Asp127, Asp157, Asp159, Asp161, Arg163, and Asp168.

In terms of assembly, monomer and homodimer. Interacts with ITGA2B (via C-terminus cytoplasmic tail region); the interaction is stabilized/increased in a calcium and magnesium-dependent manner. Interacts with TMC1.

In terms of biological role, acts a an auxiliary subunit of the sensory mechanoelectrical transduction (MET) channel in hair cells. Plays a role in regulating hair cell MET channel localization and function. The protein is Calcium and integrin-binding family member 3 (CIB3) of Homo sapiens (Human).